Reading from the N-terminus, the 683-residue chain is Dipeptidyl-peptidase 5 (683 aa).

A signal peptide spans 1–19 (MHSLFKQLVFFLVMTLTAA). N-linked (GlcNAc...) asparagine glycosylation is found at N53, N69, N103, N116, N126, and N400. Active-site charge relay system residues include S535, D617, and H649.

Belongs to the peptidase S9C family.

The protein resides in the secreted. The protein localises to the cytoplasm. It localises to the nucleus. This Schizosaccharomyces pombe (strain 972 / ATCC 24843) (Fission yeast) protein is Dipeptidyl-peptidase 5.